The following is a 375-amino-acid chain: 2-isopropylmalate synthase (375 aa).

The 124-residue stretch at 1–124 (GRTSIDNLCR…FTNIKHNELY (124 aa)) folds into the Pyruvate carboxyltransferase domain. Positions 59, 61, and 95 each coordinate Mn(2+). The segment at 250-375 (QLKYFSIHSG…SKIKNIKNKK (126 aa)) is regulatory domain.

This sequence belongs to the alpha-IPM synthase/homocitrate synthase family. LeuA type 1 subfamily. Homodimer.

It is found in the cytoplasm. The enzyme catalyses 3-methyl-2-oxobutanoate + acetyl-CoA + H2O = (2S)-2-isopropylmalate + CoA + H(+). Its pathway is amino-acid biosynthesis; L-leucine biosynthesis; L-leucine from 3-methyl-2-oxobutanoate: step 1/4. Functionally, catalyzes the condensation of the acetyl group of acetyl-CoA with 3-methyl-2-oxobutanoate (2-ketoisovalerate) to form 3-carboxy-3-hydroxy-4-methylpentanoate (2-isopropylmalate). This is 2-isopropylmalate synthase from Buchnera aphidicola subsp. Thelaxes suberi.